The following is a 550-amino-acid chain: Hydroxylamine reductase (550 aa).

[2Fe-2S] cluster contacts are provided by C3, C6, C18, and C25. Residues H249, E273, C317, C405, C433, C458, E492, and K494 each coordinate hybrid [4Fe-2O-2S] cluster. At C405 the chain carries Cysteine persulfide.

It belongs to the HCP family. Requires [2Fe-2S] cluster as cofactor. Hybrid [4Fe-2O-2S] cluster is required as a cofactor.

It is found in the cytoplasm. It catalyses the reaction A + NH4(+) + H2O = hydroxylamine + AH2 + H(+). Its function is as follows. Catalyzes the reduction of hydroxylamine to form NH(3) and H(2)O. This chain is Hydroxylamine reductase, found in Salmonella typhimurium (strain LT2 / SGSC1412 / ATCC 700720).